We begin with the raw amino-acid sequence, 444 residues long: Glutamate-1-semialdehyde 2,1-aminomutase (444 aa).

Lys-267 is subject to N6-(pyridoxal phosphate)lysine.

This sequence belongs to the class-III pyridoxal-phosphate-dependent aminotransferase family. HemL subfamily. As to quaternary structure, homodimer. It depends on pyridoxal 5'-phosphate as a cofactor.

The protein resides in the cytoplasm. The catalysed reaction is (S)-4-amino-5-oxopentanoate = 5-aminolevulinate. The protein operates within porphyrin-containing compound metabolism; protoporphyrin-IX biosynthesis; 5-aminolevulinate from L-glutamyl-tRNA(Glu): step 2/2. This is Glutamate-1-semialdehyde 2,1-aminomutase from Xylella fastidiosa (strain Temecula1 / ATCC 700964).